Reading from the N-terminus, the 37-residue chain is Cytochrome b6-f complex subunit 5 (37 aa).

Residues 5–25 form a helical membrane-spanning segment; sequence LLSGIVLGLIPITLVGLFVTA.

The protein belongs to the PetG family. As to quaternary structure, the 4 large subunits of the cytochrome b6-f complex are cytochrome b6, subunit IV (17 kDa polypeptide, PetD), cytochrome f and the Rieske protein, while the 4 small subunits are PetG, PetL, PetM and PetN. The complex functions as a dimer.

It localises to the plastid. The protein resides in the chloroplast thylakoid membrane. Its function is as follows. Component of the cytochrome b6-f complex, which mediates electron transfer between photosystem II (PSII) and photosystem I (PSI), cyclic electron flow around PSI, and state transitions. PetG is required for either the stability or assembly of the cytochrome b6-f complex. This chain is Cytochrome b6-f complex subunit 5, found in Welwitschia mirabilis (Tree tumbo).